Consider the following 351-residue polypeptide: tRNA (guanine(10)-N2)-dimethyltransferase (351 aa).

The 109-residue stretch at 57-165 (EGHRIIFRYN…ENTFFISNVL (109 aa)) folds into the THUMP domain.

It belongs to the methyltransferase superfamily. Trm-G10 family. In terms of assembly, monomer.

It localises to the cytoplasm. The enzyme catalyses guanosine(10) in tRNA + 2 S-adenosyl-L-methionine = N(2)-dimethylguanosine(10) in tRNA + 2 S-adenosyl-L-homocysteine + 2 H(+). In terms of biological role, catalyzes the adenosylmethionine-dependent methylation of the exocyclic amino group (N(2)) of guanosine at position 10 of various tRNAs. Acts via a two-step process that leads to the formation of either N(2)-monomethyl (m(2)G) or N(2)-dimethylguanosine (m(2)(2)G). The chain is tRNA (guanine(10)-N2)-dimethyltransferase (trmG10) from Methanocaldococcus jannaschii (strain ATCC 43067 / DSM 2661 / JAL-1 / JCM 10045 / NBRC 100440) (Methanococcus jannaschii).